A 292-amino-acid chain; its full sequence is Ribosomal protein L11 methyltransferase (292 aa).

S-adenosyl-L-methionine-binding residues include Thr-145, Gly-166, Asp-188, and Asn-229.

The protein belongs to the methyltransferase superfamily. PrmA family.

Its subcellular location is the cytoplasm. The enzyme catalyses L-lysyl-[protein] + 3 S-adenosyl-L-methionine = N(6),N(6),N(6)-trimethyl-L-lysyl-[protein] + 3 S-adenosyl-L-homocysteine + 3 H(+). In terms of biological role, methylates ribosomal protein L11. The chain is Ribosomal protein L11 methyltransferase from Nitrosococcus oceani (strain ATCC 19707 / BCRC 17464 / JCM 30415 / NCIMB 11848 / C-107).